Consider the following 681-residue polypeptide: DNA ligase (681 aa).

Residues 45 to 49 (DFDFD), 94 to 95 (SL), and E120 each bind NAD(+). The active-site N6-AMP-lysine intermediate is the K122. 4 residues coordinate NAD(+): R143, E177, K289, and K313. Zn(2+) is bound by residues C403, C406, C421, and C426. The 89-residue stretch at 593–681 (SDQQPFAGQS…SLKINFKNTI (89 aa)) folds into the BRCT domain.

Belongs to the NAD-dependent DNA ligase family. LigA subfamily. Requires Mg(2+) as cofactor. Mn(2+) is required as a cofactor.

The catalysed reaction is NAD(+) + (deoxyribonucleotide)n-3'-hydroxyl + 5'-phospho-(deoxyribonucleotide)m = (deoxyribonucleotide)n+m + AMP + beta-nicotinamide D-nucleotide.. Functionally, DNA ligase that catalyzes the formation of phosphodiester linkages between 5'-phosphoryl and 3'-hydroxyl groups in double-stranded DNA using NAD as a coenzyme and as the energy source for the reaction. It is essential for DNA replication and repair of damaged DNA. The chain is DNA ligase from Leptospira borgpetersenii serovar Hardjo-bovis (strain JB197).